Consider the following 193-residue polypeptide: Major structural subunit of bundle-forming pilus (193 aa).

A propeptide spans 1 to 13 (leader sequence); the sequence is MVSKIMNKKYEKG. An N-methylleucine modification is found at leucine 14. The helical transmembrane segment at 14-35 threads the bilayer; it reads LSLIESAMVLALAATVTAGVMF. A disulfide bridge links cysteine 129 with cysteine 179.

Belongs to the N-Me-Phe pilin family. In terms of assembly, 10 to 100 laterally aligned filaments or bundle-forming pili coalesce into rope-like bundles. These form linkages between the bacteria within the enteropathogenic E.coli (EPEC) microcolonies that are attached to epithelial cells.

The protein localises to the fimbrium. It localises to the membrane. Its function is as follows. Major component of type IV bundle-forming pili (BFP) that plays a role in adherence to host cells and virulence. This Escherichia coli O127:H6 (strain E2348/69 / EPEC) protein is Major structural subunit of bundle-forming pilus (bfpA).